The chain runs to 267 residues: Protein LicA (267 aa).

This sequence belongs to the peptidase S49 family.

Functionally, mediates phase variation of the LPS epitopes. Phase variation of H.influenza LPS epitopes expressed by LicA is determined by a translational switch. This Haemophilus influenzae (strain ATCC 51907 / DSM 11121 / KW20 / Rd) protein is Protein LicA (licA).